We begin with the raw amino-acid sequence, 265 residues long: Mlc titration factor A (265 aa).

Zn(2+) contacts are provided by His111, His148, His152, and Glu211.

The protein belongs to the MtfA family. Interacts with Mlc. The cofactor is Zn(2+).

The protein localises to the cytoplasm. Involved in the modulation of the activity of the glucose-phosphotransferase system (glucose-PTS). Interacts with the transcriptional repressor Mlc, preventing its interaction with DNA and leading to the modulation of expression of genes regulated by Mlc, including ptsG, which encodes the PTS system glucose-specific EIICB component. Functionally, shows zinc-dependent metallopeptidase activity. The chain is Mlc titration factor A from Escherichia coli O7:K1 (strain IAI39 / ExPEC).